Here is a 383-residue protein sequence, read N- to C-terminus: Transposase InsI for insertion sequence element IS30C (383 aa).

An Integrase catalytic domain is found at Val-213–Val-379.

Belongs to the transposase IS30 family.

In terms of biological role, required for the transposition of the insertion element. In Escherichia coli (strain K12), this protein is Transposase InsI for insertion sequence element IS30C (insI3).